Consider the following 1236-residue polypeptide: ATP-dependent helicase/nuclease subunit A (1236 aa).

In terms of domain architecture, UvrD-like helicase ATP-binding spans 2–457; sequence AHWTIEQEEA…VDLNKNFRSH (456 aa). 23–30 provides a ligand contact to ATP; it reads AAAGSGKT. In terms of domain architecture, UvrD-like helicase C-terminal spans 515-816; that stretch reads NTAKRVEICI…RIMSIHKSKG (302 aa).

Belongs to the helicase family. AddA subfamily. In terms of assembly, heterodimer of AddA and AddB/RexB. Requires Mg(2+) as cofactor.

It catalyses the reaction Couples ATP hydrolysis with the unwinding of duplex DNA by translocating in the 3'-5' direction.. The catalysed reaction is ATP + H2O = ADP + phosphate + H(+). Functionally, the heterodimer acts as both an ATP-dependent DNA helicase and an ATP-dependent, dual-direction single-stranded exonuclease. Recognizes the chi site generating a DNA molecule suitable for the initiation of homologous recombination. The AddA nuclease domain is required for chi fragment generation; this subunit has the helicase and 3' -&gt; 5' nuclease activities. This Syntrophomonas wolfei subsp. wolfei (strain DSM 2245B / Goettingen) protein is ATP-dependent helicase/nuclease subunit A.